The sequence spans 585 residues: Folylpolyglutamate synthase, mitochondrial (585 aa).

A mitochondrion-targeting transit peptide spans 1-39 (MSRARCHALFLAAVSPRGATTRVAVRRGLSAWPVLQEPD). 103–106 (GKGS) lines the ATP pocket. Mg(2+) is bound by residues Ser-127, Glu-198, and His-226. The ATP site is built by Arg-361 and Asp-375. The interval 477–497 (EEQVSPDPWSTPGQEQDGPAS) is disordered. A Phosphoserine modification is found at Ser-537.

Belongs to the folylpolyglutamate synthase family. In terms of assembly, monomer. The cofactor is a monovalent cation.

The protein localises to the mitochondrion inner membrane. It localises to the mitochondrion matrix. It is found in the cytoplasm. It carries out the reaction (6S)-5,6,7,8-tetrahydrofolyl-(gamma-L-Glu)(n) + L-glutamate + ATP = (6S)-5,6,7,8-tetrahydrofolyl-(gamma-L-Glu)(n+1) + ADP + phosphate + H(+). Its pathway is cofactor biosynthesis; tetrahydrofolylpolyglutamate biosynthesis. Functionally, catalyzes conversion of folates to polyglutamate derivatives allowing concentration of folate compounds in the cell and the intracellular retention of these cofactors, which are important substrates for most of the folate-dependent enzymes that are involved in one-carbon transfer reactions involved in purine, pyrimidine and amino acid synthesis. The sequence is that of Folylpolyglutamate synthase, mitochondrial (FPGS) from Bos taurus (Bovine).